We begin with the raw amino-acid sequence, 98 residues long: Beta-elicitin cinnamomin (98 aa).

Disulfide bonds link cysteine 3–cysteine 71, cysteine 27–cysteine 56, and cysteine 51–cysteine 95. The Beak-like motif 1 (ligand binding) signature appears at tyrosine 33–proline 42. Positions aspartate 72–aspartate 83 match the Beak-like motif 2 (ligand binding) motif.

This sequence belongs to the elicitin family.

Its subcellular location is the secreted. Its function is as follows. Induces local and distal defense responses (incompatible hypersensitive reaction) in plants from the solanaceae and cruciferae families. Elicits leaf necrosis and causes the accumulation of pathogenesis-related proteins. Might interact with the lipidic molecules of the plasma membrane. Elicitins are able to load, carry, and transfer sterols between membranes. This is Beta-elicitin cinnamomin from Phytophthora cinnamomi (Cinnamon fungus).